A 463-amino-acid polypeptide reads, in one-letter code: UDP-N-acetylmuramoylalanine--D-glutamate ligase (463 aa).

116–122 (GTNGKTT) serves as a coordination point for ATP.

This sequence belongs to the MurCDEF family.

It is found in the cytoplasm. It catalyses the reaction UDP-N-acetyl-alpha-D-muramoyl-L-alanine + D-glutamate + ATP = UDP-N-acetyl-alpha-D-muramoyl-L-alanyl-D-glutamate + ADP + phosphate + H(+). The protein operates within cell wall biogenesis; peptidoglycan biosynthesis. Functionally, cell wall formation. Catalyzes the addition of glutamate to the nucleotide precursor UDP-N-acetylmuramoyl-L-alanine (UMA). This is UDP-N-acetylmuramoylalanine--D-glutamate ligase from Synechococcus elongatus (strain ATCC 33912 / PCC 7942 / FACHB-805) (Anacystis nidulans R2).